The following is a 122-amino-acid chain: MIQMQTYLTIADNTGGKVAQCIKVLGGSKRRYAKIGDIITIVVKQAIPNSSVKKGDVYKAVIVRTSKEVRRKNGTYVRFDDNACVILDANLSPRGKRVFGPVARELRDANFMKVVSLASEVI.

The protein belongs to the universal ribosomal protein uL14 family. In terms of assembly, part of the 50S ribosomal subunit. Forms a cluster with proteins L3 and L19. In the 70S ribosome, L14 and L19 interact and together make contacts with the 16S rRNA in bridges B5 and B8.

Binds to 23S rRNA. Forms part of two intersubunit bridges in the 70S ribosome. This chain is Large ribosomal subunit protein uL14, found in Borreliella burgdorferi (strain ATCC 35210 / DSM 4680 / CIP 102532 / B31) (Borrelia burgdorferi).